Reading from the N-terminus, the 381-residue chain is Cytochrome b (381 aa).

Helical transmembrane passes span 34–54 (FGSL…FLAM), 78–99 (WLIR…YFHI), 114–134 (WNIG…GYVL), and 179–199 (FFAF…IHVL). Residues His-84 and His-98 each contribute to the heme b site. Heme b is bound by residues His-183 and His-197. Position 202 (His-202) interacts with a ubiquinone. 4 consecutive transmembrane segments (helical) span residues 227 to 247 (YKDA…ALFL), 289 to 309 (LGGV…PFLH), 321 to 341 (LTQI…WIGG), and 348 to 368 (FILI…IALP).

Belongs to the cytochrome b family. In terms of assembly, the cytochrome bc1 complex contains 3 respiratory subunits (MT-CYB, CYC1 and UQCRFS1), 2 core proteins (UQCRC1 and UQCRC2) and probably 6 low-molecular weight proteins. Requires heme b as cofactor.

The protein resides in the mitochondrion inner membrane. In terms of biological role, component of the ubiquinol-cytochrome c reductase complex (complex III or cytochrome b-c1 complex) that is part of the mitochondrial respiratory chain. The b-c1 complex mediates electron transfer from ubiquinol to cytochrome c. Contributes to the generation of a proton gradient across the mitochondrial membrane that is then used for ATP synthesis. In Isurus oxyrinchus (Shortfin mako shark), this protein is Cytochrome b (mt-cyb).